The primary structure comprises 653 residues: Bifunctional lysine-specific demethylase and histidyl-hydroxylase NO66 (653 aa).

Low complexity predominate over residues 1 to 12 (MKKATTSAAAKS). Disordered stretches follow at residues 1-50 (MKKA…DMLA) and 65-137 (FDDD…LERT). The span at 13 to 26 (QGNSKMQKNANNGT) shows a compositional bias: polar residues. Residue serine 44 is modified to Phosphoserine. Residues 72 to 86 (STSKKTQSGSAAAAK) are compositionally biased toward low complexity. A Phosphoserine modification is found at serine 131. A Phosphothreonine modification is found at threonine 137. At serine 138 the chain carries Phosphoserine. The tract at residues 184 to 208 (AEPTEEGNNNNDEKETETIETHKAD) is disordered. Basic and acidic residues predominate over residues 194–208 (NDEKETETIETHKAD). Residues 300–450 (FYSDGCSIRL…NLLETLMPMV (151 aa)) form the JmjC domain. Positions 351, 353, and 416 each coordinate Fe cation.

It belongs to the ROX family. NO66 subfamily. Fe(2+) is required as a cofactor.

The protein localises to the nucleus. The enzyme catalyses N(6),N(6)-dimethyl-L-lysyl(36)-[histone H3] + 2 2-oxoglutarate + 2 O2 = L-lysyl(36)-[histone H3] + 2 formaldehyde + 2 succinate + 2 CO2. Functionally, oxygenase that can act as both a histone lysine demethylase and a ribosomal histidine hydroxylase. Specifically demethylates 'Lys-4' (H3K4me) and 'Lys-36' (H3K36me) of histone H3, thereby playing a central role in histone code. In Drosophila melanogaster (Fruit fly), this protein is Bifunctional lysine-specific demethylase and histidyl-hydroxylase NO66.